Consider the following 637-residue polypeptide: DNA gyrase subunit B (637 aa).

The 115-residue stretch at 420 to 534 folds into the Toprim domain; the sequence is CEIYIVEGDS…EGHVFIAQPP (115 aa). Mg(2+)-binding residues include Glu-426, Asp-499, and Asp-501.

It belongs to the type II topoisomerase GyrB family. In terms of assembly, heterotetramer, composed of two GyrA and two GyrB chains. In the heterotetramer, GyrA contains the active site tyrosine that forms a transient covalent intermediate with DNA, while GyrB binds cofactors and catalyzes ATP hydrolysis. Requires Mg(2+) as cofactor. Mn(2+) is required as a cofactor. It depends on Ca(2+) as a cofactor.

The protein resides in the cytoplasm. The enzyme catalyses ATP-dependent breakage, passage and rejoining of double-stranded DNA.. Functionally, a type II topoisomerase that negatively supercoils closed circular double-stranded (ds) DNA in an ATP-dependent manner to modulate DNA topology and maintain chromosomes in an underwound state. Negative supercoiling favors strand separation, and DNA replication, transcription, recombination and repair, all of which involve strand separation. Also able to catalyze the interconversion of other topological isomers of dsDNA rings, including catenanes and knotted rings. Type II topoisomerases break and join 2 DNA strands simultaneously in an ATP-dependent manner. The polypeptide is DNA gyrase subunit B (Clostridium acetobutylicum (strain ATCC 824 / DSM 792 / JCM 1419 / IAM 19013 / LMG 5710 / NBRC 13948 / NRRL B-527 / VKM B-1787 / 2291 / W)).